A 119-amino-acid chain; its full sequence is MKKAYRVKSDKDFQAIFTEGRSVANRKFVVYSLEKDQSHYRVGLSVGKRLGNAVVRNAIKRKLRHVLMELGPYLGTQDFVVIARKGVEELDYSTMKKNLVHVLKLAKLYQEGSIREKEI.

This sequence belongs to the RnpA family. Consists of a catalytic RNA component (M1 or rnpB) and a protein subunit.

The catalysed reaction is Endonucleolytic cleavage of RNA, removing 5'-extranucleotides from tRNA precursor.. Functionally, RNaseP catalyzes the removal of the 5'-leader sequence from pre-tRNA to produce the mature 5'-terminus. It can also cleave other RNA substrates such as 4.5S RNA. The protein component plays an auxiliary but essential role in vivo by binding to the 5'-leader sequence and broadening the substrate specificity of the ribozyme. This Streptococcus mutans serotype c (strain ATCC 700610 / UA159) protein is Ribonuclease P protein component.